The following is a 312-amino-acid chain: tRNA (adenine(58)-N(1))-methyltransferase catalytic subunit trmt61a (312 aa).

S-adenosyl-L-methionine contacts are provided by residues leucine 85, 112–114 (SGS), glutamate 133, arginine 138, 161–162 (DA), and aspartate 183.

The protein belongs to the class I-like SAM-binding methyltransferase superfamily. TRM61 family. In terms of assembly, heterotetramer; composed of two copies of trmt6 and two copies of trmt61a.

Its subcellular location is the nucleus. The catalysed reaction is adenosine(58) in tRNA + S-adenosyl-L-methionine = N(1)-methyladenosine(58) in tRNA + S-adenosyl-L-homocysteine + H(+). Its activity is regulated as follows. Inhibited by calcium and magnesium ions and spermidine. Enhanced by KCl, NaCl and NH(4)Cl in concentrations from 0.1-0.25 M. Concentrations of more than 0.3 M are inhibitory. Its function is as follows. Catalytic subunit of tRNA (adenine-N(1)-)-methyltransferase, which catalyzes the formation of N(1)-methyladenine at position 58 (m1A58) in initiator methionyl-tRNA. The sequence is that of tRNA (adenine(58)-N(1))-methyltransferase catalytic subunit trmt61a (trmt61a) from Dictyostelium discoideum (Social amoeba).